An 882-amino-acid chain; its full sequence is Nitrogen regulatory protein areA (882 aa).

Positions 1–13 (MSGLTLGGGGSGG) are enriched in gly residues. Disordered regions lie at residues 1–75 (MSGL…PDSL), 139–191 (KRKE…LTSD), 228–257 (SRKD…SEFG), 325–344 (NNHS…FGLD), 394–422 (STDF…EHSM), 461–545 (NQDQ…DMNG), and 579–675 (MDTP…GPTT). Over residues 48 to 59 (SDFSQLSDDFSF) the composition is skewed to low complexity. Composition is skewed to polar residues over residues 156 to 169 (NSVS…QLTS) and 177 to 191 (PTRQ…LTSD). Over residues 325–334 (NNHSSSHHNH) the composition is skewed to basic residues. Composition is skewed to polar residues over residues 394–413 (STDF…STPQ) and 492–503 (QVLNPNDFSTGA). Residues 604 to 613 (VRNREQDPRR) show a composition bias toward basic and acidic residues. Over residues 617–642 (ARTTSTPNTAQLLRQSMNANTSHTSP) the composition is skewed to polar residues. A GATA-type zinc finger spans residues 676–700 (CTNCFTQTTPLWRRNPEGQPLCNAC). Residues 723–871 (RNRSSANSLA…NHSIAGGQGA (149 aa)) form a disordered region. Low complexity predominate over residues 745–759 (KNSVQQTTVTTPTSS). The segment covering 795–811 (NPTTSSPGQSRGTSSVQ) has biased composition (polar residues). A compositionally biased stretch (low complexity) spans 848-861 (ALAPAMPPAAANPA).

The protein localises to the nucleus. In terms of biological role, major nitrogen regulatory protein. Positively acting regulatory gene of nitrogen metabolite repression. This Aspergillus niger protein is Nitrogen regulatory protein areA (areA).